The following is a 328-amino-acid chain: Glutathionyl-hydroquinone reductase YqjG (328 aa).

The Nucleophile role is filled by cysteine 63. Residues tryptophan 96, 130 to 133, and 148 to 149 contribute to the glutathione site; these read RVTV and ES. The 125-residue stretch at 172-296 folds into the GST C-terminal domain; that stretch reads PPALQTKIDE…VNFDHIRNHY (125 aa). Catalysis depends on tyrosine 195, which acts as the Proton donor/acceptor. The interval 203–311 is dimerization; it reads QEAYDEAVAK…TINPTGIISI (109 aa).

This sequence belongs to the GST superfamily. Xi-class GSH transferase family. Homodimer.

The enzyme catalyses 2-(glutathione-S-yl)-hydroquinone + glutathione = hydroquinone + glutathione disulfide. Catalyzes glutathione (GSH)-dependent reduction of glutathionyl-hydroquinones (GS-HQs) to the corresponding hydroquinones. Can use a variety of GS-HQs as substrates, such as GS-p-hydroquinone (GS-HQ), GS-hydroxy-p-hydroquinone (GS-HHQ), GS-methyl-p-hydroquinone (GS-MHQ), GS-menadiol, and GS-trichloro-p-hydroquinone (GS-TriCH). Also displays GSH-dependent disulfide-bond reduction activity toward HED (2-hydroxyethyl disulfide), and is able to catalyze DMA (dimethylarsinate) reduction. Exhibits no GSH transferase activity with 1-chloro-2,4-dinitrobenzene (CDNB). The protein is Glutathionyl-hydroquinone reductase YqjG (yqjG) of Escherichia coli (strain K12).